Reading from the N-terminus, the 144-residue chain is MEALVLVGHGSRLPHSKNVVMEVAEKIKARNIYDIVEVGMMEFNEPTIPQTIKKVIDAGAKKVIVTPVFLAPGNHTERDIPKILGIYEGDDEGGHHHHHDHEHHHHHHDTTAVEIPEGVELVYRKPMGADDRIIDIVLDRANGL.

His-9 functions as the Proton acceptor in the catalytic mechanism. His-9 contacts Co(2+). His-9 is a Ni(2+) binding site. Substrate-binding positions include Glu-45 and 70–75 (LAPGNH). His-75 lines the Co(2+) pocket. Residue His-75 coordinates Ni(2+). The disordered stretch occupies residues 89-112 (GDDEGGHHHHHDHEHHHHHHDTTA). The segment covering 95 to 108 (HHHHHDHEHHHHHH) has biased composition (basic residues).

Belongs to the CbiX family. CbiXS subfamily. As to quaternary structure, homotetramer; dimer of dimers.

It catalyses the reaction Co-sirohydrochlorin + 2 H(+) = sirohydrochlorin + Co(2+). The enzyme catalyses Ni-sirohydrochlorin + 2 H(+) = sirohydrochlorin + Ni(2+). It functions in the pathway cofactor biosynthesis; adenosylcobalamin biosynthesis; cob(II)yrinate a,c-diamide from sirohydrochlorin (anaerobic route): step 1/10. Catalyzes the insertion of Co(2+) into sirohydrochlorin as part of the anaerobic pathway to cobalamin biosynthesis. Involved in the biosynthesis of the unique nickel-containing tetrapyrrole coenzyme F430, the prosthetic group of methyl-coenzyme M reductase (MCR), which plays a key role in methanogenesis and anaerobic methane oxidation. Catalyzes the insertion of Ni(2+) into sirohydrochlorin to yield Ni-sirohydrochlorin. In Methanococcus maripaludis (strain DSM 14266 / JCM 13030 / NBRC 101832 / S2 / LL), this protein is Sirohydrochlorin cobaltochelatase.